We begin with the raw amino-acid sequence, 126 residues long: Fluoride-specific ion channel FluC (126 aa).

A run of 4 helical transmembrane segments spans residues 4-24 (SILA…FLGL), 36-56 (GTLA…ALFA), 68-88 (LIIT…AEVV), and 99-119 (AFAA…AGIA). Na(+)-binding residues include Gly-75 and Thr-78.

Belongs to the fluoride channel Fluc/FEX (TC 1.A.43) family.

It localises to the cell inner membrane. The catalysed reaction is fluoride(in) = fluoride(out). Na(+) is not transported, but it plays an essential structural role and its presence is essential for fluoride channel function. Functionally, fluoride-specific ion channel. Important for reducing fluoride concentration in the cell, thus reducing its toxicity. The chain is Fluoride-specific ion channel FluC from Chromobacterium violaceum (strain ATCC 12472 / DSM 30191 / JCM 1249 / CCUG 213 / NBRC 12614 / NCIMB 9131 / NCTC 9757 / MK).